A 299-amino-acid polypeptide reads, in one-letter code: 4-hydroxy-tetrahydrodipicolinate synthase (299 aa).

Thr-50 lines the pyruvate pocket. Tyr-139 serves as the catalytic Proton donor/acceptor. The active-site Schiff-base intermediate with substrate is the Lys-167. Residue Val-209 coordinates pyruvate.

The protein belongs to the DapA family. In terms of assembly, homotetramer; dimer of dimers.

It localises to the cytoplasm. It carries out the reaction L-aspartate 4-semialdehyde + pyruvate = (2S,4S)-4-hydroxy-2,3,4,5-tetrahydrodipicolinate + H2O + H(+). Its pathway is amino-acid biosynthesis; L-lysine biosynthesis via DAP pathway; (S)-tetrahydrodipicolinate from L-aspartate: step 3/4. Its function is as follows. Catalyzes the condensation of (S)-aspartate-beta-semialdehyde [(S)-ASA] and pyruvate to 4-hydroxy-tetrahydrodipicolinate (HTPA). The polypeptide is 4-hydroxy-tetrahydrodipicolinate synthase (Synechococcus elongatus (strain ATCC 33912 / PCC 7942 / FACHB-805) (Anacystis nidulans R2)).